Here is a 52-residue protein sequence, read N- to C-terminus: uncharacterized protein (52 aa).

This is an uncharacterized protein from Thermoproteus tenax (TTV1).